Consider the following 229-residue polypeptide: Cytidylate kinase (229 aa).

12-20 (GPSGVGKST) contacts ATP.

Belongs to the cytidylate kinase family. Type 1 subfamily.

The protein resides in the cytoplasm. It catalyses the reaction CMP + ATP = CDP + ADP. The enzyme catalyses dCMP + ATP = dCDP + ADP. This Mesomycoplasma hyopneumoniae (strain 7448) (Mycoplasma hyopneumoniae) protein is Cytidylate kinase.